The primary structure comprises 471 residues: U1 small nuclear ribonucleoprotein 70 kDa (471 aa).

Positions F48 to R78 are disordered. Over residues A60–R78 the composition is skewed to basic and acidic residues. The tract at residues H92–G202 is required for interaction with U1 RNA. The RRM domain occupies K103–V184. The segment at W187–E471 is disordered. Positions L192 to R201 are enriched in gly residues. Residues N207–R245 are compositionally biased toward basic and acidic residues. The span at R246 to S259 shows a compositional bias: basic residues. A compositionally biased stretch (basic and acidic residues) spans R260–R293. Over residues D294–E303 the composition is skewed to basic residues. 2 stretches are compositionally biased toward basic and acidic residues: residues R304 to G321 and I344 to P428.

As to quaternary structure, component of the U1 snRNP. The U1 snRNP is composed of the U1 snRNA and the 7 core Sm proteins snrpb, snrpd1, snrpd2, snrpd3, snrpe, snrpf and snrpg that assemble in a heptameric protein ring on the Sm site of the small nuclear RNA to form the core snRNP, and at least three U1 snRNP-specific proteins snrnp70/U1-70K, snrpa/U1-A and snrpc/U1-C.

It localises to the nucleus speckle. The protein localises to the nucleus. Its subcellular location is the nucleoplasm. In terms of biological role, component of the spliceosomal U1 snRNP, which is essential for recognition of the pre-mRNA 5' splice-site and the subsequent assembly of the spliceosome. snrnp70 binds to the loop I region of U1-snRNA. In Xenopus tropicalis (Western clawed frog), this protein is U1 small nuclear ribonucleoprotein 70 kDa (snrnp70).